The sequence spans 187 residues: MGIDLIAGGKSKKTKRTAPKSDDVYLKLTVKLYRFLVRRTNSKFNGVILKRLFMSKVNKAPLSLSRLVEFMTGKEDKIAVLVGTITDDLRVHEIPAMKVTALRFTERARARIEKAGGECLTFDQLALRAPLGQNTVLLRGPKNSREAVKHFGPAPGVPHSHSKPYVRAKGRKFEKARGKRKSRGFKV.

Positions 151 to 187 are disordered; that stretch reads FGPAPGVPHSHSKPYVRAKGRKFEKARGKRKSRGFKV. Composition is skewed to basic residues over residues 160 to 170 and 177 to 187; these read SHSKPYVRAKG and RGKRKSRGFKV.

It belongs to the eukaryotic ribosomal protein eL18 family. Interacts with NIK1. Interacts directly with EXA1. As to expression, ubiquitous.

Its subcellular location is the cytoplasm. This is Large ribosomal subunit protein eL18y (RPL18B) from Arabidopsis thaliana (Mouse-ear cress).